Reading from the N-terminus, the 380-residue chain is Cytochrome b (380 aa).

Helical transmembrane passes span 34-54 (FGSL…LLAM), 78-99 (WLIR…YLHI), 114-134 (WNTG…GYVL), and 179-199 (FFAL…IHLT). Residues His84 and His98 each contribute to the heme b site. Heme b-binding residues include His183 and His197. His202 contributes to the a ubiquinone binding site. Helical transmembrane passes span 227–247 (LKDF…ALFT), 289–309 (LGGV…PFLH), 321–341 (LSQT…WIGS), and 348–368 (FITI…ILFP).

Belongs to the cytochrome b family. As to quaternary structure, the cytochrome bc1 complex contains 11 subunits: 3 respiratory subunits (MT-CYB, CYC1 and UQCRFS1), 2 core proteins (UQCRC1 and UQCRC2) and 6 low-molecular weight proteins (UQCRH/QCR6, UQCRB/QCR7, UQCRQ/QCR8, UQCR10/QCR9, UQCR11/QCR10 and a cleavage product of UQCRFS1). This cytochrome bc1 complex then forms a dimer. Heme b serves as cofactor.

It is found in the mitochondrion inner membrane. Component of the ubiquinol-cytochrome c reductase complex (complex III or cytochrome b-c1 complex) that is part of the mitochondrial respiratory chain. The b-c1 complex mediates electron transfer from ubiquinol to cytochrome c. Contributes to the generation of a proton gradient across the mitochondrial membrane that is then used for ATP synthesis. The sequence is that of Cytochrome b (MT-CYB) from Coracias caudatus (Lilac-breasted roller).